We begin with the raw amino-acid sequence, 702 residues long: BRCA1-associated RING domain protein 1 (702 aa).

The RING-type zinc-finger motif lies at 18-67; it reads CVKCKKPRGDLQYLGSSCKHAYCWECIATFQQKPSGKRSSVARHMCPSCA. Disordered stretches follow at residues 153–205 and 281–346; these read DENR…TSVK and ASMS…YGTR. Residues 174 to 188 show a composition bias toward polar residues; sequence ASPTRNSTKRPSTVS. The span at 312–321 shows a compositional bias: basic and acidic residues; that stretch reads IKSDKIERRS. ANK repeat units lie at residues 347–376, 379–408, and 413–442; these read RGEA…CVNE, DGKT…VINA, and TLET…SIKI. In terms of domain architecture, BRCT spans 601 to 702; the sequence is MQPKLFAGCK…LGCSITTPPH (102 aa).

As to quaternary structure, heterodimer (via RING-type zinc finger) with brc-1 to form the core CeBCD complex. Brc-1-brd-1 heterodimer-containing CeBCD complexes bound to chromatin are activated as an E3-ubiquitin ligase in response to DNA damage. The heterodimer interacts with the recombinase rad-51 following ionizing irradiation; the interaction is direct. The heterodimer interacts the E2-ubiquitin-conjugating enzyme let-70 following ionizing irradiation. The heterodimer interacts with the pro-crossover proteins msh-5 and syp-3. Interacts with smt-3, tac-1 and ubc-9. Autoubiquitinated. In terms of processing, phosphorylation of CeBCD complexes is required for E3 ubiquitin-protein ligase activity.

It localises to the cytoplasm. The protein localises to the nucleus. The protein resides in the chromosome. It carries out the reaction S-ubiquitinyl-[E2 ubiquitin-conjugating enzyme]-L-cysteine + [acceptor protein]-L-lysine = [E2 ubiquitin-conjugating enzyme]-L-cysteine + N(6)-ubiquitinyl-[acceptor protein]-L-lysine.. The protein operates within protein modification; protein ubiquitination. E3 ubiquitin-protein ligase activity of CeBCD complexes occurs at DNA damage sites. Following DNA damage, E3 ubiquitin-protein ligase activity is reduced by caffeine treatment (inhibitor of ATM and ATK kinase activity). Functionally, constituent of the CeBCD complex that possesses E3 ubiquitin-protein ligase activity. When bound to chromatin, the brc-1-brd-1 heterodimer within the CeBCD complex is inactive during normal conditions, but in response to DNA damage, the brc-1-brd-1 heterodimer associates with other proteins such as the recombinase rad-51 or the E2-ubiquitin-conjugating enzyme let-70, which activate the CeBCD complex as an E3-ubiquitin ligase. Moreover, association between the brc-1-brd-1 heterodimer and rad-51 and let-70, probably requires DNA checkpoint proteins such as atl-1 and mre-11 in order to induce ubiquitination at DNA damage sites. To this end, the brc-1-brd-1 heterodimer coordinates a diverse range of cellular pathways such as DNA damage repair, ubiquitination and transcriptional regulation to maintain genomic stability. Plays a role in triggering cellular responses at damage sites in response to DNA damage that may be induced by ionizing radiation for example. In particular, protects against chromosome non-disjunction and nuclear fragmentation during meiotic double-strand break repair to ensure sister chromatid recombination and aid chromosome stability. The chain is BRCA1-associated RING domain protein 1 from Caenorhabditis elegans.